The chain runs to 231 residues: Aldehyde decarbonylase (231 aa).

Residues glutamate 32, glutamate 60, histidine 63, glutamate 115, and histidine 147 each contribute to the Fe cation site.

This sequence belongs to the aldehyde decarbonylase family. Binds 2 metal cations per subunit. The catalytic dinuclear metal-binding site could be either a di-iron or a manganese-iron cofactor. is required as a cofactor.

The enzyme catalyses a long-chain fatty aldehyde + 2 NADPH + O2 + H(+) = a long-chain alkane + formate + 2 NADP(+) + H2O. Functionally, catalyzes the decarbonylation of fatty aldehydes to alkanes. Requires the presence of ferredoxin, ferredoxin reductase and NADPH for in vitro decarbonylase activity. Involved in the biosynthesis of alkanes, mainly heptadecane and pentadecane. In Synechocystis sp. (strain ATCC 27184 / PCC 6803 / Kazusa), this protein is Aldehyde decarbonylase.